Reading from the N-terminus, the 430-residue chain is Serine--tRNA ligase (430 aa).

236–238 (TAE) serves as a coordination point for L-serine. Residue 267 to 269 (RRE) participates in ATP binding. Position 290 (E290) interacts with L-serine. 354-357 (EISS) lines the ATP pocket. S390 lines the L-serine pocket.

This sequence belongs to the class-II aminoacyl-tRNA synthetase family. Type-1 seryl-tRNA synthetase subfamily. Homodimer. The tRNA molecule binds across the dimer.

It localises to the cytoplasm. The catalysed reaction is tRNA(Ser) + L-serine + ATP = L-seryl-tRNA(Ser) + AMP + diphosphate + H(+). It carries out the reaction tRNA(Sec) + L-serine + ATP = L-seryl-tRNA(Sec) + AMP + diphosphate + H(+). It participates in aminoacyl-tRNA biosynthesis; selenocysteinyl-tRNA(Sec) biosynthesis; L-seryl-tRNA(Sec) from L-serine and tRNA(Sec): step 1/1. Its function is as follows. Catalyzes the attachment of serine to tRNA(Ser). Is also able to aminoacylate tRNA(Sec) with serine, to form the misacylated tRNA L-seryl-tRNA(Sec), which will be further converted into selenocysteinyl-tRNA(Sec). This chain is Serine--tRNA ligase, found in Gloeothece citriformis (strain PCC 7424) (Cyanothece sp. (strain PCC 7424)).